The following is a 699-amino-acid chain: Ribosomal RNA large subunit methyltransferase K/L (699 aa).

A THUMP domain is found at 44–155 (DAYKLCLWSR…RDNVILGIDL (112 aa)).

This sequence belongs to the methyltransferase superfamily. RlmKL family.

The protein localises to the cytoplasm. It carries out the reaction guanosine(2445) in 23S rRNA + S-adenosyl-L-methionine = N(2)-methylguanosine(2445) in 23S rRNA + S-adenosyl-L-homocysteine + H(+). It catalyses the reaction guanosine(2069) in 23S rRNA + S-adenosyl-L-methionine = N(2)-methylguanosine(2069) in 23S rRNA + S-adenosyl-L-homocysteine + H(+). Specifically methylates the guanine in position 2445 (m2G2445) and the guanine in position 2069 (m7G2069) of 23S rRNA. This Alteromonas mediterranea (strain DSM 17117 / CIP 110805 / LMG 28347 / Deep ecotype) protein is Ribosomal RNA large subunit methyltransferase K/L.